Consider the following 260-residue polypeptide: Zinc import ATP-binding protein ZnuC (260 aa).

The ABC transporter domain maps to 18–234 (IRLQEVAVTF…PEYQKLFGSH (217 aa)). An ATP-binding site is contributed by 50–57 (GNNGAGKT). The tract at residues 241–260 (VFPHDHHDHSGPALAGGGRG) is disordered.

It belongs to the ABC transporter superfamily. Zinc importer (TC 3.A.1.15.5) family. The complex is composed of two ATP-binding proteins (ZnuC), two transmembrane proteins (ZnuB) and a solute-binding protein (ZnuA).

The protein localises to the cell inner membrane. The catalysed reaction is Zn(2+)(out) + ATP(in) + H2O(in) = Zn(2+)(in) + ADP(in) + phosphate(in) + H(+)(in). Part of the ABC transporter complex ZnuABC involved in zinc import. Responsible for energy coupling to the transport system. The chain is Zinc import ATP-binding protein ZnuC from Halorhodospira halophila (strain DSM 244 / SL1) (Ectothiorhodospira halophila (strain DSM 244 / SL1)).